The primary structure comprises 36 residues: uncharacterized protein (36 aa).

This is an uncharacterized protein from Escherichia coli (strain K12).